The following is a 220-amino-acid chain: Zinc finger protein 36 (220 aa).

The C2H2-type 1 zinc finger occupies Phe-73–His-95. A disordered region spans residues Gly-90–Pro-134. Residues Ala-107–Ala-117 are compositionally biased toward low complexity. Residues His-135 to His-157 form a C2H2-type 2 zinc finger.

Probable transcription factor involved in abscisic acid (ABA) signaling. Required for the regulation of the cross-talk between NADPH oxidase, hydrogen peroxide and MAP kinase in ABA signaling. Regulates the expression of the NADPH oxidase genes RBOHB and RBOHE, and the MAPK genes MPK1, MPK4, MPK5, MPK7 and MPK14. Regulates ABA-induced hydrogen peroxide production and antioxidant defense. Required for tolerance to water stress and oxidative stress. This chain is Zinc finger protein 36, found in Oryza sativa subsp. japonica (Rice).